Here is a 1411-residue protein sequence, read N- to C-terminus: DNA-directed RNA polymerase subunit beta' (1411 aa).

Residues Cys69, Cys71, Cys84, and Cys87 each contribute to the Zn(2+) site. 3 residues coordinate Mg(2+): Asp461, Asp463, and Asp465. The Zn(2+) site is built by Cys809, Cys883, Cys890, and Cys893.

The protein belongs to the RNA polymerase beta' chain family. In terms of assembly, the RNAP catalytic core consists of 2 alpha, 1 beta, 1 beta' and 1 omega subunit. When a sigma factor is associated with the core the holoenzyme is formed, which can initiate transcription. The cofactor is Mg(2+). Zn(2+) serves as cofactor.

It carries out the reaction RNA(n) + a ribonucleoside 5'-triphosphate = RNA(n+1) + diphosphate. In terms of biological role, DNA-dependent RNA polymerase catalyzes the transcription of DNA into RNA using the four ribonucleoside triphosphates as substrates. The sequence is that of DNA-directed RNA polymerase subunit beta' from Ehrlichia ruminantium (strain Gardel).